We begin with the raw amino-acid sequence, 300 residues long: Jacalin-related lectin 33 (300 aa).

The interval 1 to 20 is disordered; that stretch reads MAQKVEAGGGAGGASWDDGV. At Ala2 the chain carries N-acetylalanine. 2 Jacalin-type lectin domains span residues 2-146 and 154-297; these read AQKV…YFAT and AKKL…HVMP.

This sequence belongs to the jacalin lectin family. Component of the PYK10 complex, at least composed of PYK10/BGLU23, BGLU21, BGLU22, JAL22, JAL23, PBP1/JAL30, PBP2/JAL31, JAL32, JAL33, JAL34, JAL35, GLL22 and GLL23.

Functionally, sugar-binding protein showing significant affinity for (Glc alpha(1-4)Glc)(3) maltohexaose, (Glc alpha(1-6)Glc)(3) isomaltohexaose, Gal alpha(1-4)Gal beta(1-4)Glc, GalNAc alpha(1-3)(Fuc alpha(1-2)) and Gal beta(1-3)(Fuc alpha(1-4))GlcNAc beta(1-3)Gal beta(1-4)Glc. The chain is Jacalin-related lectin 33 (JAL33) from Arabidopsis thaliana (Mouse-ear cress).